The following is a 436-amino-acid chain: UDP-glucuronate 4-epimerase 5 (436 aa).

The next 2 membrane-spanning stretches (helical) occupy residues 36–56 (LTLW…LSPP) and 95–115 (GLTV…SIAL). Residue 97–128 (TVLVTGASGFVGTHVSIALRRRGDGVLGLDNF) coordinates NAD(+). Y247 functions as the Proton acceptor in the catalytic mechanism.

The protein belongs to the NAD(P)-dependent epimerase/dehydratase family. In terms of assembly, homodimer. As to expression, in leaves, pollen and siliques, but not in roots or flowers.

Its subcellular location is the golgi apparatus. The protein localises to the golgi stack membrane. The catalysed reaction is UDP-alpha-D-glucuronate = UDP-alpha-D-galacturonate. Involved in the synthesis of the negatively charged monosaccharide that forms the backbone of pectic cell wall components. The chain is UDP-glucuronate 4-epimerase 5 (GAE5) from Arabidopsis thaliana (Mouse-ear cress).